We begin with the raw amino-acid sequence, 268 residues long: Small ribosomal subunit protein eS1 (268 aa).

Disordered stretches follow at residues 1 to 21 and 238 to 268; these read MAVG…KKKV and GGGK…QEAV.

It belongs to the eukaryotic ribosomal protein eS1 family. As to quaternary structure, component of the small ribosomal subunit. Mature ribosomes consist of a small (40S) and a large (60S) subunit. The 40S subunit contains about 33 different proteins and 1 molecule of RNA (18S). The 60S subunit contains about 49 different proteins and 3 molecules of RNA (28S, 5.8S and 5S).

It is found in the cytoplasm. Essential for oogenesis; required for late follicle cell development. In Drosophila ananassae (Fruit fly), this protein is Small ribosomal subunit protein eS1.